The primary structure comprises 262 residues: Cutinase 2 (262 aa).

Position 61 (Tyr61) interacts with poly(ethylene terephthalate). The active-site Nucleophile is the Ser131. Met132 and Trp156 together coordinate poly(ethylene terephthalate). Active-site charge relay system residues include Asp177 and His209. A disulfide bridge links Cys242 with Cys260.

Belongs to the AB hydrolase superfamily.

It is found in the secreted. The protein resides in the periplasm. The enzyme catalyses a butanoate ester + H2O = an aliphatic alcohol + butanoate + H(+). It carries out the reaction an acetyl ester + H2O = an aliphatic alcohol + acetate + H(+). The catalysed reaction is (ethylene terephthalate)(n) + H2O = (ethylene terephthalate)(n-1) + 4-[(2-hydroxyethoxy)carbonyl]benzoate + H(+). It catalyses the reaction cutin + H2O = cutin monomers.. In terms of biological role, catalyzes the hydrolysis of cutin, a polyester that forms the structure of plant cuticle. Shows esterase activity towards p-nitrophenol-linked aliphatic esters (pNP-aliphatic esters). Capable of degrading the plastic poly(ethylene terephthalate) (PET), the most abundant polyester plastic in the world. Capable of degrading the bioplastic poly(lactic acid) (PLLA). The polypeptide is Cutinase 2 (Thermobifida cellulosilytica).